The chain runs to 192 residues: Protein A16 (192 aa).

A signal peptide spans 1-22 (MLLANTAAAVLLLIVCIGASVG). The C-type lectin domain maps to 71 to 186 (KNKKFTIGTL…CLNPLNIFPY (116 aa)). Cysteines 163 and 177 form a disulfide.

Expressed in the gut of adults.

This Anopheles gambiae (African malaria mosquito) protein is Protein A16 (CTL3).